The chain runs to 307 residues: Ribosomal RNA small subunit methyltransferase H (307 aa).

S-adenosyl-L-methionine-binding positions include 33–35 (GGY), aspartate 51, phenylalanine 82, aspartate 96, and glutamine 103.

This sequence belongs to the methyltransferase superfamily. RsmH family.

It is found in the cytoplasm. The enzyme catalyses cytidine(1402) in 16S rRNA + S-adenosyl-L-methionine = N(4)-methylcytidine(1402) in 16S rRNA + S-adenosyl-L-homocysteine + H(+). Its function is as follows. Specifically methylates the N4 position of cytidine in position 1402 (C1402) of 16S rRNA. This chain is Ribosomal RNA small subunit methyltransferase H, found in Rickettsia massiliae (strain Mtu5).